A 147-amino-acid polypeptide reads, in one-letter code: Peptide methionine sulfoxide reductase MsrB 2 (147 aa).

Residues T6–R129 enclose the MsrB domain. The active-site Nucleophile is the C118.

Belongs to the MsrB Met sulfoxide reductase family.

The catalysed reaction is L-methionyl-[protein] + [thioredoxin]-disulfide + H2O = L-methionyl-(R)-S-oxide-[protein] + [thioredoxin]-dithiol. The protein is Peptide methionine sulfoxide reductase MsrB 2 (msrB2) of Rhizobium meliloti (strain 1021) (Ensifer meliloti).